Reading from the N-terminus, the 123-residue chain is Ribosome-binding factor A (123 aa).

Belongs to the RbfA family. Monomer. Binds 30S ribosomal subunits, but not 50S ribosomal subunits or 70S ribosomes.

The protein localises to the cytoplasm. One of several proteins that assist in the late maturation steps of the functional core of the 30S ribosomal subunit. Associates with free 30S ribosomal subunits (but not with 30S subunits that are part of 70S ribosomes or polysomes). Required for efficient processing of 16S rRNA. May interact with the 5'-terminal helix region of 16S rRNA. This is Ribosome-binding factor A from Syntrophus aciditrophicus (strain SB).